A 125-amino-acid polypeptide reads, in one-letter code: Glycine cleavage system H protein (125 aa).

Residues 19-101 (VGTVGISDYA…EGAAWFFKLT (83 aa)) form the Lipoyl-binding domain. The residue at position 60 (Lys-60) is an N6-lipoyllysine.

This sequence belongs to the GcvH family. The glycine cleavage system is composed of four proteins: P, T, L and H. Requires (R)-lipoate as cofactor.

Functionally, the glycine cleavage system catalyzes the degradation of glycine. The H protein shuttles the methylamine group of glycine from the P protein to the T protein. This Paramagnetospirillum magneticum (strain ATCC 700264 / AMB-1) (Magnetospirillum magneticum) protein is Glycine cleavage system H protein.